The following is a 101-amino-acid chain: Protein Tat (101 aa).

An interaction with human CREBBP region spans residues 1-24 (MEPVDPNLEPWKHPGSQPRTACNN). Residues 1 to 48 (MEPVDPNLEPWKHPGSQPRTACNNCYCKKCCFHCYACFTRKGLGISYG) are transactivation. The Zn(2+) site is built by Cys-22, Cys-25, and Cys-27. The tract at residues 22-37 (CNNCYCKKCCFHCYAC) is cysteine-rich. Residue Lys-28 is modified to N6-acetyllysine; by host PCAF. Cys-30, His-33, Cys-34, and Cys-37 together coordinate Zn(2+). Positions 38–48 (FTRKGLGISYG) are core. The segment covering 48–57 (GRKKRRQRRR) has biased composition (basic residues). Residues 48–101 (GRKKRRQRRRAPQDSQTHQASLSKQPASQSRGDPTGPTESKKKVERETETDPFD) are disordered. Positions 49–57 (RKKRRQRRR) match the Nuclear localization signal, RNA-binding (TAR), and protein transduction motif. The tract at residues 49-86 (RKKRRQRRRAPQDSQTHQASLSKQPASQSRGDPTGPTE) is interaction with the host capping enzyme RNGTT. N6-acetyllysine; by host EP300 and GCN5L2 occurs at positions 50 and 51. Arg-52 and Arg-53 each carry asymmetric dimethylarginine; by host PRMT6. The span at 60 to 79 (QDSQTHQASLSKQPASQSRG) shows a compositional bias: polar residues. Lys-71 is covalently cross-linked (Glycyl lysine isopeptide (Lys-Gly) (interchain with G-Cter in ubiquitin)). A Cell attachment site motif is present at residues 78–80 (RGD). The span at 86–101 (ESKKKVERETETDPFD) shows a compositional bias: basic and acidic residues.

It belongs to the lentiviruses Tat family. Interacts with host CCNT1. Associates with the P-TEFb complex composed at least of Tat, P-TEFb (CDK9 and CCNT1), TAR RNA, RNA Pol II. Recruits the HATs CREBBP, TAF1/TFIID, EP300, PCAF and GCN5L2. Interacts with host KAT5/Tip60; this interaction targets the latter to degradation. Interacts with the host deacetylase SIRT1. Interacts with host capping enzyme RNGTT; this interaction stimulates RNGTT. Binds to host KDR, and to the host integrins ITGAV/ITGB3 and ITGA5/ITGB1. Interacts with host KPNB1/importin beta-1 without previous binding to KPNA1/importin alpha-1. Interacts with EIF2AK2. Interacts with host nucleosome assembly protein NAP1L1; this interaction may be required for the transport of Tat within the nucleus, since the two proteins interact at the nuclear rim. Interacts with host C1QBP/SF2P32; this interaction involves lysine-acetylated Tat. Interacts with the host chemokine receptors CCR2, CCR3 and CXCR4. Interacts with host DPP4/CD26; this interaction may trigger an anti-proliferative effect. Interacts with host LDLR. Interacts with the host extracellular matrix metalloproteinase MMP1. Interacts with host PRMT6; this interaction mediates Tat's methylation. Interacts with, and is ubiquitinated by MDM2/Hdm2. Interacts with host PSMC3 and HTATIP2. Interacts with STAB1; this interaction may overcome SATB1-mediated repression of IL2 and IL2RA (interleukin) in T cells by binding to the same domain than HDAC1. Interacts (when acetylated) with human CDK13, thereby increasing HIV-1 mRNA splicing and promoting the production of the doubly spliced HIV-1 protein Nef. Interacts with host TBP; this interaction modulates the activity of transcriptional pre-initiation complex. Interacts with host RELA. Interacts with host PLSCR1; this interaction negatively regulates Tat transactivation activity by altering its subcellular distribution. Asymmetrical arginine methylation by host PRMT6 seems to diminish the transactivation capacity of Tat and affects the interaction with host CCNT1. Post-translationally, acetylation by EP300, CREBBP, GCN5L2/GCN5 and PCAF regulates the transactivation activity of Tat. EP300-mediated acetylation of Lys-50 promotes dissociation of Tat from the TAR RNA through the competitive binding to PCAF's bromodomain. In addition, the non-acetylated Tat's N-terminus can also interact with PCAF. PCAF-mediated acetylation of Lys-28 enhances Tat's binding to CCNT1. Lys-50 is deacetylated by SIRT1. In terms of processing, polyubiquitination by host MDM2 does not target Tat to degradation, but activates its transactivation function and fosters interaction with CCNT1 and TAR RNA. Phosphorylated by EIF2AK2 on serine and threonine residues adjacent to the basic region important for TAR RNA binding and function. Phosphorylation of Tat by EIF2AK2 is dependent on the prior activation of EIF2AK2 by dsRNA.

It is found in the host nucleus. It localises to the host nucleolus. Its subcellular location is the host cytoplasm. The protein localises to the secreted. In terms of biological role, transcriptional activator that increases RNA Pol II processivity, thereby increasing the level of full-length viral transcripts. Recognizes a hairpin structure at the 5'-LTR of the nascent viral mRNAs referred to as the transactivation responsive RNA element (TAR) and recruits the cyclin T1-CDK9 complex (P-TEFb complex) that will in turn hyperphosphorylate the RNA polymerase II to allow efficient elongation. The CDK9 component of P-TEFb and other Tat-activated kinases hyperphosphorylate the C-terminus of RNA Pol II that becomes stabilized and much more processive. Other factors such as HTATSF1/Tat-SF1, SUPT5H/SPT5, and HTATIP2 are also important for Tat's function. Besides its effect on RNA Pol II processivity, Tat induces chromatin remodeling of proviral genes by recruiting the histone acetyltransferases (HATs) CREBBP, EP300 and PCAF to the chromatin. This also contributes to the increase in proviral transcription rate, especially when the provirus integrates in transcriptionally silent region of the host genome. To ensure maximal activation of the LTR, Tat mediates nuclear translocation of NF-kappa-B by interacting with host RELA. Through its interaction with host TBP, Tat may also modulate transcription initiation. Tat can reactivate a latently infected cell by penetrating in it and transactivating its LTR promoter. In the cytoplasm, Tat is thought to act as a translational activator of HIV-1 mRNAs. Functionally, extracellular circulating Tat can be endocytosed by surrounding uninfected cells via the binding to several surface receptors such as CD26, CXCR4, heparan sulfate proteoglycans (HSPG) or LDLR. Neurons are rarely infected, but they internalize Tat via their LDLR. Through its interaction with nuclear HATs, Tat is potentially able to control the acetylation-dependent cellular gene expression. Modulates the expression of many cellular genes involved in cell survival, proliferation or in coding for cytokines or cytokine receptors. Tat plays a role in T-cell and neurons apoptosis. Tat induced neurotoxicity and apoptosis probably contribute to neuroAIDS. Circulating Tat also acts as a chemokine-like and/or growth factor-like molecule that binds to specific receptors on the surface of the cells, affecting many cellular pathways. In the vascular system, Tat binds to ITGAV/ITGB3 and ITGA5/ITGB1 integrins dimers at the surface of endothelial cells and competes with bFGF for heparin-binding sites, leading to an excess of soluble bFGF. This is Protein Tat from Homo sapiens (Human).